We begin with the raw amino-acid sequence, 1704 residues long: Villidin (1704 aa).

WD repeat units lie at residues 82 to 122 (GHTD…LIKD), 133 to 173 (KQQK…EQSS), 180 to 221 (GHED…TPIQ), and 225 to 271 (THEG…SSQP). 2 disordered regions span residues 439 to 460 (IGNS…DSPF) and 606 to 721 (SVPS…NSST). A compositionally biased stretch (gly residues) spans 442–456 (SGSGGGGGDGDGNGG). Positions 459-563 (PFITEGIVKQ…WCQSINAYRE (105 aa)) constitute a PH 1 domain. Composition is skewed to low complexity over residues 613-636 (QQQQ…TPTQ), 651-701 (SLKS…SSSS), and 709-721 (NNST…NSST). PH domains are found at residues 727–828 (DIVI…QNLK) and 871–969 (EQPL…AARK). A disordered region spans residues 848–877 (LISSPMSDDESNTNEGGVEEEEEEQPLEGQ). The segment covering 854–873 (SDDESNTNEGGVEEEEEEQP) has biased composition (acidic residues). 5 Gelsolin-like repeats span residues 1025-1119 (KQKI…LGGN), 1138-1241 (IKTT…FANY), 1293-1390 (GRVK…FKTK), 1404-1494 (KKPS…FEST), and 1520-1615 (RFFV…FRAW). The 64-residue stretch at 1641 to 1704 (DYLKEIYTYE…EGIKKELFLF (64 aa)) folds into the HP domain.

The protein localises to the membrane. It localises to the cytoplasm. It is found in the cytoskeleton. May function as a linker between membranes and the actin cytoskeleton. The protein is Villidin (vilA) of Dictyostelium discoideum (Social amoeba).